The chain runs to 405 residues: F-box/kelch-repeat protein At2g43445 (405 aa).

The F-box domain occupies 7 to 53; the sequence is NTNSIYIVSELLEEIFLGLPLKSILKFKTVSKQWRSILESNLFVERR. Kelch repeat units follow at residues 146–197 and 356–400; these read RDKV…CVNG and THHD…VVGY.

This is F-box/kelch-repeat protein At2g43445 from Arabidopsis thaliana (Mouse-ear cress).